We begin with the raw amino-acid sequence, 827 residues long: Tuftelin-interacting protein 11 (827 aa).

Disordered regions lie at residues 31–129 (FNPH…KGFV) and 179–203 (QRKG…DFPV). Basic and acidic residues predominate over residues 41–60 (TKEEATYGVWAERDSDEERP). Acidic residues predominate over residues 88-98 (DVSDEDSDEDE). Over residues 99–112 (KPVKQEEIPKEFVP) the composition is skewed to basic and acidic residues. In terms of domain architecture, G-patch spans 145–191 (TKGIGQKLLQKMGYVPGRGLGKNAQGIINPIEAKQRKGKGAVGAYGS).

It belongs to the TFP11/STIP family. In terms of assembly, identified in the spliceosome C complex.

Its subcellular location is the nucleus. In terms of biological role, involved in pre-mRNA splicing, specifically in spliceosome disassembly during late-stage splicing events. This is Tuftelin-interacting protein 11 (TFIP11) from Gallus gallus (Chicken).